Reading from the N-terminus, the 206-residue chain is 3-demethoxyubiquinol 3-hydroxylase (206 aa).

Residues Glu-55, Glu-85, His-88, Glu-137, Glu-169, and His-172 each coordinate Fe cation.

It belongs to the COQ7 family. Fe cation serves as cofactor.

It is found in the cell membrane. The catalysed reaction is a 5-methoxy-2-methyl-3-(all-trans-polyprenyl)benzene-1,4-diol + AH2 + O2 = a 3-demethylubiquinol + A + H2O. Its pathway is cofactor biosynthesis; ubiquinone biosynthesis. In terms of biological role, catalyzes the hydroxylation of 2-nonaprenyl-3-methyl-6-methoxy-1,4-benzoquinol during ubiquinone biosynthesis. The polypeptide is 3-demethoxyubiquinol 3-hydroxylase (Aromatoleum aromaticum (strain DSM 19018 / LMG 30748 / EbN1) (Azoarcus sp. (strain EbN1))).